Consider the following 420-residue polypeptide: Gamma-glutamyl phosphate reductase (420 aa).

This sequence belongs to the gamma-glutamyl phosphate reductase family.

Its subcellular location is the cytoplasm. The enzyme catalyses L-glutamate 5-semialdehyde + phosphate + NADP(+) = L-glutamyl 5-phosphate + NADPH + H(+). It participates in amino-acid biosynthesis; L-proline biosynthesis; L-glutamate 5-semialdehyde from L-glutamate: step 2/2. Catalyzes the NADPH-dependent reduction of L-glutamate 5-phosphate into L-glutamate 5-semialdehyde and phosphate. The product spontaneously undergoes cyclization to form 1-pyrroline-5-carboxylate. The polypeptide is Gamma-glutamyl phosphate reductase (Cereibacter sphaeroides (strain ATCC 17029 / ATH 2.4.9) (Rhodobacter sphaeroides)).